The sequence spans 63 residues: 2-hydroxymuconate tautomerase (63 aa).

The active-site Proton acceptor; via imino nitrogen is Pro-2.

The protein belongs to the 4-oxalocrotonate tautomerase family. In terms of assembly, homohexamer.

It catalyses the reaction (2Z,4E)-2-hydroxyhexa-2,4-dienedioate = (3E)-2-oxohex-3-enedioate. Its pathway is xenobiotic degradation; toluene degradation. It functions in the pathway xenobiotic degradation; xylene degradation. Its function is as follows. Catalyzes the ketonization of 2-hydroxymuconate stereoselectively to yield 2-oxo-3-hexenedioate. This Pseudomonas putida (Arthrobacter siderocapsulatus) protein is 2-hydroxymuconate tautomerase (xylH).